Consider the following 279-residue polypeptide: Sulfur carrier protein FdhD (279 aa).

The active-site Cysteine persulfide intermediate is cysteine 112.

The protein belongs to the FdhD family.

It localises to the cytoplasm. Its function is as follows. Required for formate dehydrogenase (FDH) activity. Acts as a sulfur carrier protein that transfers sulfur from IscS to the molybdenum cofactor prior to its insertion into FDH. The sequence is that of Sulfur carrier protein FdhD from Nocardia farcinica (strain IFM 10152).